The primary structure comprises 440 residues: Serine/threonine-protein kinase toxin HipA (440 aa).

Ser-150 bears the Phosphoserine; by autocatalysis mark. Residues Ala-152–Lys-157, Lys-181, and Glu-234–Phe-236 contribute to the ATP site. Asp-309 (proton acceptor) is an active-site residue. Residues His-311 to Asn-314 and Tyr-331 to Asp-332 each bind ATP. The DNA-binding element occupies Lys-379 to Arg-382.

It belongs to the HipA Ser/Thr kinase family. As to quaternary structure, forms a HipA(2)HipB(2) heterotetramer which can interact with a single operator on DNA. When 2 operators are present each HipB dimer contacts 1 HipA molecule, which are brought together by the DNA bend and dimerize, blocking the HipA active site and inactivating its toxic activity. Mutations present in allele hipA7 (G22S and D291A) decrease the affinity of HipA for HipB. Post-translationally, autophosphorylates intermolecularly on Ser-150; phosphorylated form not seen to bind ATP and no longer has kinase activity.

It carries out the reaction L-seryl-[protein] + ATP = O-phospho-L-seryl-[protein] + ADP + H(+). It catalyses the reaction L-threonyl-[protein] + ATP = O-phospho-L-threonyl-[protein] + ADP + H(+). Once phosphorylated no longer has kinase activity. Toxic component of a type II toxin-antitoxin (TA) system, first identified by mutations that increase production of persister cells, a fraction of cells that are phenotypic variants not killed by antibiotics, which lead to multidrug tolerance. Persistence may be ultimately due to global remodeling of the persister cell's ribosomes. Phosphorylates Glu-tRNA-ligase (AC P04805, gltX, on 'Ser-239') in vivo. Phosphorylation of GltX prevents it from being charged, leading to an increase in uncharged tRNA(Glu). This induces amino acid starvation and the stringent response via RelA/SpoT and increased (p)ppGpp levels, which inhibits replication, transcription, translation and cell wall synthesis, reducing growth and leading to persistence and multidrug resistance. Once the level of HipA exceeds a threshold cells become dormant, and the length of dormancy is determined by how much HipA levels exceed the threshold. The hipA7 mutation (a double G22S D291A mutation) leads to increased generation of persister cells (cells that survive antibiotic treatment) probably by entering into a dormant state, as well as cold-sensitivity. Wild-type cells produce persisters at a frequency of 10(-6) to 10(-5) whereas hipA7 cells produce about 100-fold more persisters. hipA7 decreases the affinity for antitoxin HipB, leading to increased HipA levels and persistence; depending on the protein level, can be toxic enough to reduce cell growth or even kill cells. Generation of persister cells requires (p)ppGpp as cells lacking relA or relA/spoT generate fewer or no persister cells respectively compared to hipA7. The toxic effect of HipA is neutralized by its cognate antitoxin HipB. Also neutralized by overexpression of gltX. With HipB acts as a corepressor for transcription of the hipBA promoter; binding of HipA-HipB to DNA induces a 70 degree bend. This brings together and dimerizes 2 HipA molecules, which distorts the promoter region, preventing sigma-factor binding; additionally HipA and HipB would physically prevent RNA core polymerase from contacting the -35 promoter box. May play a role in biofilm formation. This chain is Serine/threonine-protein kinase toxin HipA (hipA), found in Escherichia coli (strain K12).